A 233-amino-acid polypeptide reads, in one-letter code: Ribonuclease HII (233 aa).

The 190-residue stretch at 26–215 (QLVAGIDEVG…VRASEGEGLE (190 aa)) folds into the RNase H type-2 domain. Asp32, Glu33, and Asp124 together coordinate a divalent metal cation. The tract at residues 211–233 (GEGLETAAGRQSSEGKKGRRPRG) is disordered.

The protein belongs to the RNase HII family. The cofactor is Mn(2+). Mg(2+) is required as a cofactor.

It is found in the cytoplasm. The catalysed reaction is Endonucleolytic cleavage to 5'-phosphomonoester.. Its function is as follows. Endonuclease that specifically degrades the RNA of RNA-DNA hybrids. This is Ribonuclease HII from Syntrophobacter fumaroxidans (strain DSM 10017 / MPOB).